The following is a 413-amino-acid chain: Serine hydroxymethyltransferase (413 aa).

(6S)-5,6,7,8-tetrahydrofolate contacts are provided by residues Leu120 and 124 to 126 (GHL). Lys228 is modified (N6-(pyridoxal phosphate)lysine).

It belongs to the SHMT family. As to quaternary structure, homodimer. Requires pyridoxal 5'-phosphate as cofactor.

The protein localises to the cytoplasm. It catalyses the reaction (6R)-5,10-methylene-5,6,7,8-tetrahydrofolate + glycine + H2O = (6S)-5,6,7,8-tetrahydrofolate + L-serine. The protein operates within one-carbon metabolism; tetrahydrofolate interconversion. It participates in amino-acid biosynthesis; glycine biosynthesis; glycine from L-serine: step 1/1. Functionally, catalyzes the reversible interconversion of serine and glycine with tetrahydrofolate (THF) serving as the one-carbon carrier. This reaction serves as the major source of one-carbon groups required for the biosynthesis of purines, thymidylate, methionine, and other important biomolecules. Also exhibits THF-independent aldolase activity toward beta-hydroxyamino acids, producing glycine and aldehydes, via a retro-aldol mechanism. The protein is Serine hydroxymethyltransferase of Agathobacter rectalis (strain ATCC 33656 / DSM 3377 / JCM 17463 / KCTC 5835 / VPI 0990) (Eubacterium rectale).